Here is a 132-residue protein sequence, read N- to C-terminus: ATP synthase epsilon chain (132 aa).

The segment covering 88–102 has biased composition (basic and acidic residues); the sequence is IDKERAEAARQRAQE. The segment at 88–112 is disordered; the sequence is IDKERAEAARQRAQERLNSQSDDTD.

This sequence belongs to the ATPase epsilon chain family. As to quaternary structure, F-type ATPases have 2 components, CF(1) - the catalytic core - and CF(0) - the membrane proton channel. CF(1) has five subunits: alpha(3), beta(3), gamma(1), delta(1), epsilon(1). CF(0) has three main subunits: a, b and c. The F(1)F(0) complex interacts with SpoIIIJ and YqjG; YqgA is found in the same complex.

It is found in the cell membrane. Functionally, produces ATP from ADP in the presence of a proton gradient across the membrane. This is ATP synthase epsilon chain (atpC) from Bacillus subtilis (strain 168).